The following is a 446-amino-acid chain: Argininosuccinate synthase (446 aa).

Residues 17–25 and A43 each bind ATP; that span reads AFSGGLDTS. L-citrulline is bound at residue Y99. Positions 129 and 131 each coordinate ATP. L-aspartate contacts are provided by T131, N135, and D136. Residue N135 coordinates L-citrulline. D136 provides a ligand contact to ATP. Positions 139 and 192 each coordinate L-citrulline. D194 contacts ATP. L-citrulline contacts are provided by T201, E203, and E280.

Belongs to the argininosuccinate synthase family. Type 2 subfamily. As to quaternary structure, homotetramer.

The protein resides in the cytoplasm. It carries out the reaction L-citrulline + L-aspartate + ATP = 2-(N(omega)-L-arginino)succinate + AMP + diphosphate + H(+). The protein operates within amino-acid biosynthesis; L-arginine biosynthesis; L-arginine from L-ornithine and carbamoyl phosphate: step 2/3. In Variovorax paradoxus (strain S110), this protein is Argininosuccinate synthase.